Here is a 90-residue protein sequence, read N- to C-terminus: Small ribosomal subunit protein uS15c (90 aa).

The protein belongs to the universal ribosomal protein uS15 family. In terms of assembly, part of the 30S ribosomal subunit.

The protein resides in the plastid. The protein localises to the chloroplast. The sequence is that of Small ribosomal subunit protein uS15c (rps15) from Acorus calamus (Sweet flag).